The primary structure comprises 175 residues: Centrosomal protein 20 (175 aa).

Positions 1-104 are necessary and sufficient for homooligomerization and localization to centrosomes and pericentriolar satellites; that stretch reads MATIAELKAV…IVEDANGKSV (104 aa). In terms of domain architecture, LisH spans 49–81; sequence ENLLINELIREYLEFNKYKYSASVLTAEAGQPE. Residues 137 to 166 are disordered; sequence RQNLAKPSTERNQKDRIPEPGRMAGTSIEE. Positions 144–155 are enriched in basic and acidic residues; sequence STERNQKDRIPE.

This sequence belongs to the CEP43 family. As to quaternary structure, homooligomer; probably required for localization to centrosomes.

The protein localises to the cell projection. Its subcellular location is the cilium. It is found in the cytoplasm. The protein resides in the cytoskeleton. It localises to the cilium basal body. The protein localises to the microtubule organizing center. Its subcellular location is the centrosome. It is found in the cytoplasmic granule. The protein resides in the centriolar satellite. Its function is as follows. Involved in the biogenesis of cilia. Required for the recruitment of PLK1 to centrosomes and S phase progression. The chain is Centrosomal protein 20 (CEP20) from Gallus gallus (Chicken).